Reading from the N-terminus, the 215-residue chain is MNIVLLGPPGSGKGTQAKMIAEKFNVKHISTGDILREHVRNGTELGKEAKKYMDAGQLVPDSILIGIIKDRLSKPDVAGGYMLDGYPRTIPQAEALDKILPELKQKIDVVLNIDVPDEELVRRLSGRRMCKCGRSYHIIFNPPKVPGKCDECGGELYHRDDDKEEAILNRLKVYKQQTQPLIDYYTKAGLIANINGAGEINQIFDEISKVLSKFQ.

10-15 (GSGKGT) contributes to the ATP binding site. An NMP region spans residues 30–59 (STGDILREHVRNGTELGKEAKKYMDAGQLV). AMP contacts are provided by residues Thr31, Arg36, 57-59 (QLV), 85-88 (GYPR), and Gln92. The interval 126 to 162 (GRRMCKCGRSYHIIFNPPKVPGKCDECGGELYHRDDD) is LID. ATP is bound at residue Arg127. Positions 130 and 132 each coordinate Zn(2+). 135-136 (SY) is an ATP binding site. Zn(2+)-binding residues include Cys149 and Cys152. AMP-binding residues include Arg159 and Arg170. Gly198 contacts ATP.

This sequence belongs to the adenylate kinase family. Monomer.

The protein localises to the cytoplasm. It carries out the reaction AMP + ATP = 2 ADP. Its pathway is purine metabolism; AMP biosynthesis via salvage pathway; AMP from ADP: step 1/1. In terms of biological role, catalyzes the reversible transfer of the terminal phosphate group between ATP and AMP. Plays an important role in cellular energy homeostasis and in adenine nucleotide metabolism. The sequence is that of Adenylate kinase from Methanothrix thermoacetophila (strain DSM 6194 / JCM 14653 / NBRC 101360 / PT) (Methanosaeta thermophila).